Here is a 771-residue protein sequence, read N- to C-terminus: Rho guanine nucleotide exchange factor 6 (771 aa).

The Calponin-homology (CH) domain maps to 1-111 (MNPEERLVTW…TLLAVNKATE (111 aa)). Residues 115 to 157 (SERPCGRSSSLSAATSSQTNPQVAVPSTAPEQHSEEKAEMTEN) are disordered. Residues 122–131 (SSSLSAATSS) are compositionally biased toward low complexity. Ser126 carries the post-translational modification Phosphoserine. Thr133 is subject to Phosphothreonine. Positions 159-218 (SHQLIVKARFNFKQTNEDELSVCKGDIIYVTRVEEGGWWEGTLNGRTGWFPSNYVREIKP) constitute an SH3 domain. The residue at position 224 (Ser224) is a Phosphoserine. One can recognise a DH domain in the interval 240–420 (YYTVVLQNIL…KTLMGQCQDL (181 aa)). One can recognise a PH domain in the interval 442–547 (DIKTLGNVIF…WMEQLNRLTK (106 aa)). The residue at position 487 (Ser487) is a Phosphoserine. A compositionally biased stretch (low complexity) spans 556-572 (SKTSSSSCSTHSSFSST). The segment at 556-580 (SKTSSSSCSTHSSFSSTGQPRGPLE) is disordered. Ser639 and Ser679 each carry phosphoserine.

In terms of assembly, interacts with PAK kinases through the SH3 domain. Interacts with GIT1. Component of cytoplasmic complexes, which also contain PXN, GIT1 and PAK1. Interacts with BIN2. Identified in a complex with BIN2 and GIT2. Interacts with PARVB. Interacts with PARVG; the guanine nucleotide exchange factor activity of ARHGEF6 is essential for PARVG-induced enhancement of cell spreading. In terms of tissue distribution, detected in adult heart, spleen, lung, skeletal muscle, kidney and testis. Detected throughout embryogenesis.

The protein resides in the cell projection. It is found in the lamellipodium. In terms of biological role, acts as a RAC1 guanine nucleotide exchange factor (GEF). This is Rho guanine nucleotide exchange factor 6 (Arhgef6) from Mus musculus (Mouse).